A 338-amino-acid polypeptide reads, in one-letter code: Heat shock factor 2-binding protein (338 aa).

The disordered stretch occupies residues 1–20 (MAATVGDGSGTEEACRNMES). Positions 12–126 (EEACRNMESK…LLQQAEYCTQ (115 aa)) form a coiled coil. The interaction with BRME1 stretch occupies residues 18-55 (MESKEEFVKVRKKDLERLTTEVMQIRDFLPRILNGELL). The tract at residues 87-338 (ARLETAQADS…EDLRALDCNV (252 aa)) is interaction with BRCA2.

In terms of assembly, interacts (via C-terminus) with BNC1. Associates with HSF2. The interaction seems to occur between the trimerization domain of HSF2 and the N-terminal hydrophilic region of HSF2BP. Interacts (via N-terminus) with BRME1. Interacts with BRCA2 and BRME1; the interactions are direct and allow the formation of a ternary complex. The complex BRME1:HSF2BP:BRCA2 interacts with SPATA22, MEIOB and RAD51. Sumoylated by UBE2I in response to MEKK1-mediated stimuli. Expressed in testis and, to a lesser extent, in lung and muscle.

Its subcellular location is the cytoplasm. It localises to the chromosome. Its function is as follows. Meiotic recombination factor component of recombination bridges involved in meiotic double-strand break repair. Modulates the localization of recombinases DMC1:RAD51 to meiotic double-strand break (DSB) sites through the interaction with BRCA2 and its recruitment during meiotic recombination. Indispensable for the DSB repair, homologous synapsis, and crossover formation that are needed for progression past metaphase I, is essential for spermatogenesis and male fertility. Required for proper recombinase recruitment in female meiosis. Inhibits BNC1 transcriptional activity during spermatogenesis, probably by sequestering it in the cytoplasm. May be involved in modulating HSF2 activation in testis. This Mus musculus (Mouse) protein is Heat shock factor 2-binding protein.